The primary structure comprises 351 residues: DNA nickase (351 aa).

Residues histidine 241, glutamate 245, and histidine 303 each coordinate Fe cation.

Acts as a DNA nickase. This chain is DNA nickase, found in Nostoc sp. (strain PCC 7120 / SAG 25.82 / UTEX 2576).